We begin with the raw amino-acid sequence, 332 residues long: Holliday junction branch migration complex subunit RuvB (332 aa).

The segment at 1–181 is large ATPase domain (RuvB-L); that stretch reads MARILDNNVM…FGITGHMEYY (181 aa). ATP-binding positions include L20, R21, G62, K65, T66, T67, 128–130, R171, Y181, and R218; that span reads EDF. Residue T66 coordinates Mg(2+). Residues 182-252 are small ATPAse domain (RuvB-S); it reads QEKDLTEIVE…ITDRALTMLD (71 aa). Residues 255–332 are head domain (RuvB-H); sequence REGLDYIDQK…RHLGYPYQNT (78 aa). DNA contacts are provided by R291, R310, R312, and R315.

Belongs to the RuvB family. Homohexamer. Forms an RuvA(8)-RuvB(12)-Holliday junction (HJ) complex. HJ DNA is sandwiched between 2 RuvA tetramers; dsDNA enters through RuvA and exits via RuvB. An RuvB hexamer assembles on each DNA strand where it exits the tetramer. Each RuvB hexamer is contacted by two RuvA subunits (via domain III) on 2 adjacent RuvB subunits; this complex drives branch migration. In the full resolvosome a probable DNA-RuvA(4)-RuvB(12)-RuvC(2) complex forms which resolves the HJ.

The protein resides in the cytoplasm. It catalyses the reaction ATP + H2O = ADP + phosphate + H(+). In terms of biological role, the RuvA-RuvB-RuvC complex processes Holliday junction (HJ) DNA during genetic recombination and DNA repair, while the RuvA-RuvB complex plays an important role in the rescue of blocked DNA replication forks via replication fork reversal (RFR). RuvA specifically binds to HJ cruciform DNA, conferring on it an open structure. The RuvB hexamer acts as an ATP-dependent pump, pulling dsDNA into and through the RuvAB complex. RuvB forms 2 homohexamers on either side of HJ DNA bound by 1 or 2 RuvA tetramers; 4 subunits per hexamer contact DNA at a time. Coordinated motions by a converter formed by DNA-disengaged RuvB subunits stimulates ATP hydrolysis and nucleotide exchange. Immobilization of the converter enables RuvB to convert the ATP-contained energy into a lever motion, pulling 2 nucleotides of DNA out of the RuvA tetramer per ATP hydrolyzed, thus driving DNA branch migration. The RuvB motors rotate together with the DNA substrate, which together with the progressing nucleotide cycle form the mechanistic basis for DNA recombination by continuous HJ branch migration. Branch migration allows RuvC to scan DNA until it finds its consensus sequence, where it cleaves and resolves cruciform DNA. The protein is Holliday junction branch migration complex subunit RuvB of Streptococcus pyogenes serotype M1.